The primary structure comprises 418 residues: Aspartate aminotransferase, cytoplasmic (418 aa).

Serine 2 is subject to N-acetylserine. Residues glycine 38, tryptophan 135, and asparagine 188 each contribute to the L-aspartate site. Lysine 255 is modified (N6-(pyridoxal phosphate)lysine). Arginine 387 is a binding site for L-aspartate. Serine 389 is subject to Phosphoserine.

The protein belongs to the class-I pyridoxal-phosphate-dependent aminotransferase family. As to quaternary structure, homodimer. Pyridoxal 5'-phosphate serves as cofactor.

It localises to the cytoplasm. It is found in the peroxisome. It catalyses the reaction L-aspartate + 2-oxoglutarate = oxaloacetate + L-glutamate. Its function is as follows. Plays a key role in amino acid metabolism. The sequence is that of Aspartate aminotransferase, cytoplasmic (AAT2) from Saccharomyces cerevisiae (strain ATCC 204508 / S288c) (Baker's yeast).